The chain runs to 522 residues: MEELQGYLEKDRSRQQPLLYPLLFQEYIYALAHDRGLKGSLFYEPTEVFGYDSKFSLALVKRLIIRIYQQNFFLSVVNDSNKNRFVSHHHNNFCYSHFYSQMISEGFAILVEIPFSLRLVSYFEKKEIPKSHNLRSIHSFFPFLEDKLLHSDYVSDIIIPHPIHMEILVQILQCWIQDVPLLHFLRFFLHKYHNWNSFLITPKKSIYVFSKENKRLFRFLYNSYVSECEFLLVFLRKQSSYLRLTSFGTFLERRHFYVKMEHLQMQHLILIVVCRDYFQGTLWSFKDPFMHYVRCQGKAVLASKGTHFLMKKWKYNFVNLWQYYFHFWYQSYRIHINQLSNYSFYFMGYLSSLLKNSSTVRNQMLENSFLIDTVTNKFETIVPVIFLIGSLSKAQFCTVSGHPISKPIWADLSDSEIIERFGRMCRNLSHYHSGSSKKQGLYRIKYILRLSCARTLAGKHKSTVRTFLRRLGSGLLEEFFTEEEQVLSLILPKTIPFTFYGSKKERIWYLDIIRINDXVNHE.

It belongs to the intron maturase 2 family. MatK subfamily.

Its subcellular location is the plastid. The protein localises to the chloroplast. Functionally, usually encoded in the trnK tRNA gene intron. Probably assists in splicing its own and other chloroplast group II introns. The chain is Maturase K from Iris domestica (Leopard lily).